The following is a 221-amino-acid chain: Placenta growth factor (221 aa).

The first 18 residues, 1 to 18 (MPVMRLFPCFLQLLAGLA), serve as a signal peptide directing secretion. N-linked (GlcNAc...) asparagine glycosylation occurs at N33. 3 disulfide bridges follow: C52-C94, C83-C128, and C87-C130. N101 is a glycosylation site (N-linked (GlcNAc...) asparagine). The interval 175–221 (QSAVWPSSPVPEEIPRMHPGRNGKKQQRKPLREKMKPERCGDAVPRR) is disordered. The segment covering 192–203 (HPGRNGKKQQRK) has biased composition (basic residues). The tract at residues 193–213 (PGRNGKKQQRKPLREKMKPER) is heparin-binding. A compositionally biased stretch (basic and acidic residues) spans 204–221 (PLREKMKPERCGDAVPRR).

The protein belongs to the PDGF/VEGF growth factor family. As to quaternary structure, antiparallel homodimer; disulfide-linked. Also found as heterodimer with VEGFA/VEGF. Isoform PlGF-3 is found both as homodimer and as monomer. In terms of processing, N-glycosylated. In terms of tissue distribution, while the three isoforms are present in most placental tissues, PlGF-2 is specific to early (8 week) placenta and only PlGF-1 is found in the colon and mammary carcinomas.

It is found in the secreted. Growth factor active in angiogenesis and endothelial cell growth, stimulating their proliferation and migration. It binds to the receptor FLT1/VEGFR-1. Isoform PlGF-2 binds NRP1/neuropilin-1 and NRP2/neuropilin-2 in a heparin-dependent manner. Also promotes cell tumor growth. The chain is Placenta growth factor (PGF) from Homo sapiens (Human).